A 143-amino-acid chain; its full sequence is D-aminoacyl-tRNA deacylase (143 aa).

The Gly-cisPro motif, important for rejection of L-amino acids signature appears at 135 to 136; that stretch reads GP.

Belongs to the DTD family. As to quaternary structure, homodimer.

The protein localises to the cytoplasm. The catalysed reaction is glycyl-tRNA(Ala) + H2O = tRNA(Ala) + glycine + H(+). It catalyses the reaction a D-aminoacyl-tRNA + H2O = a tRNA + a D-alpha-amino acid + H(+). An aminoacyl-tRNA editing enzyme that deacylates mischarged D-aminoacyl-tRNAs. Also deacylates mischarged glycyl-tRNA(Ala), protecting cells against glycine mischarging by AlaRS. Acts via tRNA-based rather than protein-based catalysis; rejects L-amino acids rather than detecting D-amino acids in the active site. By recycling D-aminoacyl-tRNA to D-amino acids and free tRNA molecules, this enzyme counteracts the toxicity associated with the formation of D-aminoacyl-tRNA entities in vivo and helps enforce protein L-homochirality. The protein is D-aminoacyl-tRNA deacylase of Mycobacterium bovis (strain ATCC BAA-935 / AF2122/97).